A 921-amino-acid chain; its full sequence is Valine--tRNA ligase (921 aa).

A 'HIGH' region motif is present at residues 40-50; that stretch reads PNVTGSLHMGH. A 'KMSKS' region motif is present at residues 522 to 526; the sequence is KMSKS. K525 contributes to the ATP binding site. Residues 849-921 are a coiled coil; that stretch reads MADLIDKEAE…LQHKNRIESL (73 aa).

The protein belongs to the class-I aminoacyl-tRNA synthetase family. ValS type 1 subfamily. Monomer.

Its subcellular location is the cytoplasm. The catalysed reaction is tRNA(Val) + L-valine + ATP = L-valyl-tRNA(Val) + AMP + diphosphate. Catalyzes the attachment of valine to tRNA(Val). As ValRS can inadvertently accommodate and process structurally similar amino acids such as threonine, to avoid such errors, it has a 'posttransfer' editing activity that hydrolyzes mischarged Thr-tRNA(Val) in a tRNA-dependent manner. This Legionella pneumophila (strain Lens) protein is Valine--tRNA ligase.